The primary structure comprises 1029 residues: Chitin synthase 3 (1029 aa).

The tract at residues 1-29 is disordered; the sequence is MAYYSRPASAGAARAQDDQDPYPYYPDPD. Asparagine 37 carries N-linked (GlcNAc...) asparagine glycosylation. Residues 46 to 71 are compositionally biased toward low complexity; that stretch reads ASGAASSASHTSPFSDAHAASASPAS. Disordered regions lie at residues 46-105 and 168-209; these read ASGA…SRMP and LAHR…AGTS. The span at 76–91 shows a compositional bias: polar residues; the sequence is SHQQVSAHAPQQQHMS. Residues 191–202 are compositionally biased toward basic and acidic residues; it reads AHDEKYAYDRPD. Residues asparagine 401, asparagine 514, asparagine 527, and asparagine 689 are each glycosylated (N-linked (GlcNAc...) asparagine). 7 helical membrane-spanning segments follow: residues 723–743, 760–780, 796–816, 830–850, 860–880, 963–983, and 998–1018; these read FYSFVNMCFAWFGLANYYIFF, IGVFNVFMQYIYLGTVVSSFI, AAVVVFALLTVYMMVAAVLCL, AQMVVSLLATYGVYLISSLLA, FLQYLLLAPTYINILNIYAFC, VVLAWALSNGVLAAFILNGDA, and VYMVLVLIFVAGMACIRFIGS.

The protein belongs to the chitin synthase family. Class I subfamily.

The protein resides in the cell membrane. It is found in the cytoplasmic vesicle membrane. It carries out the reaction [(1-&gt;4)-N-acetyl-beta-D-glucosaminyl](n) + UDP-N-acetyl-alpha-D-glucosamine = [(1-&gt;4)-N-acetyl-beta-D-glucosaminyl](n+1) + UDP + H(+). In terms of biological role, polymerizes chitin, a structural polymer of the cell wall and septum, by transferring the sugar moiety of UDP-GlcNAc to the non-reducing end of the growing chitin polymer. This Mycosarcoma maydis (Corn smut fungus) protein is Chitin synthase 3.